The chain runs to 174 residues: Gamma-crystallin F (174 aa).

2 consecutive Beta/gamma crystallin 'Greek key' domains span residues 2–40 (GKIT…RVDS) and 41–83 (GCWM…RLIP). The segment at 84–87 (HTGS) is connecting peptide. 2 Beta/gamma crystallin 'Greek key' domains span residues 88 to 128 (HRLR…NVLE) and 129 to 171 (GWWV…RRAV).

Belongs to the beta/gamma-crystallin family.

Its function is as follows. Crystallins are the dominant structural components of the vertebrate eye lens. In Bos taurus (Bovine), this protein is Gamma-crystallin F (CRYGF).